Reading from the N-terminus, the 1090-residue chain is Exocyst complex component SEC5A (1090 aa).

Residues 18-128 (LKEQAKRDLT…ARKEDDGAWD (111 aa)) form a disordered region. The span at 45–69 (QQPRQQKPVAAAAAPPKKSAAAVRK) shows a compositional bias: low complexity. A compositionally biased stretch (basic and acidic residues) spans 109-124 (RGSDVREKGRARKEDD). S180 carries the phosphoserine modification. Disordered stretches follow at residues 759 to 783 (TSRQ…NTYG), 987 to 1010 (VETP…DKQS), and 1046 to 1090 (APLE…PRRR). Residues 998-1009 (RGSEDTVSDDKQ) show a composition bias toward basic and acidic residues. The span at 1058–1082 (TYSSFRGSMDSPSRNYRGSQSSGSP) shows a compositional bias: polar residues.

The protein belongs to the SEC5 family. In terms of assembly, the exocyst complex is composed of SEC3, SEC5, SEC6, SEC8, SEC10, EXO70A1 and EXO84B. Interacts with SEC3A and EXO70B1. Binds to EXO70H1 and EXO70B2. Binds directly to B1L.

The protein localises to the cytoplasm. Its subcellular location is the cytosol. The protein resides in the secreted. It is found in the extracellular exosome. In terms of biological role, component of the exocyst complex involved in the docking of exocytic vesicles with fusion sites on the plasma membrane during regulated or polarized secretion. Involved in polarized cell growth and organ morphogenesis. During cytokinesis, involved in cell plate initiation, cell plate maturation and formation of new primary cell wall. Probable component of an exocyst subcomplex specifically involved in autophagy-related, Golgi-independent membrane traffic to the vacuole. Regulates autophagosome formation and autophagy-related Golgi-independent import into the vacuole. The protein is Exocyst complex component SEC5A of Arabidopsis thaliana (Mouse-ear cress).